We begin with the raw amino-acid sequence, 146 residues long: Small ribosomal subunit protein bS16 (146 aa).

The interval 119 to 146 (GSENKGGKSKKAEEKSAEKTAEKSEGEA) is disordered. The segment covering 128–146 (KKAEEKSAEKTAEKSEGEA) has biased composition (basic and acidic residues).

The protein belongs to the bacterial ribosomal protein bS16 family.

The chain is Small ribosomal subunit protein bS16 from Thermobifida fusca (strain YX).